Reading from the N-terminus, the 444-residue chain is Elongation factor 1-alpha (444 aa).

In terms of domain architecture, tr-type G spans 15-236; sequence KPHLNLAVIG…ALDTFQPPPR (222 aa). Positions 24–31 are G1; it reads GHVDNGKS. 24–31 serves as a coordination point for GTP; the sequence is GHVDNGKS. Residue Ser31 participates in Mg(2+) binding. Residues 80–84 are G2; sequence GVTIE. Residues 101 to 104 are G3; sequence DLPG. Residues 101 to 105 and 163 to 166 each bind GTP; these read DLPGH and NKMD. The tract at residues 163-166 is G4; the sequence is NKMD. Positions 202–204 are G5; the sequence is SAI.

Belongs to the TRAFAC class translation factor GTPase superfamily. Classic translation factor GTPase family. EF-Tu/EF-1A subfamily.

It localises to the cytoplasm. The catalysed reaction is GTP + H2O = GDP + phosphate + H(+). GTP hydrolase that promotes the GTP-dependent binding of aminoacyl-tRNA to the A-site of ribosomes during protein biosynthesis. This is Elongation factor 1-alpha from Pyrobaculum islandicum (strain DSM 4184 / JCM 9189 / GEO3).